The primary structure comprises 157 residues: UPF0756 membrane protein BH3161 (157 aa).

Transmembrane regions (helical) follow at residues 1-21 (MISQ…LAKN), 54-74 (LGVT…EIGF), 87-107 (WVAL…IDLL), and 117-137 (LVLG…GPLI).

It belongs to the UPF0756 family.

It is found in the cell membrane. The chain is UPF0756 membrane protein BH3161 from Halalkalibacterium halodurans (strain ATCC BAA-125 / DSM 18197 / FERM 7344 / JCM 9153 / C-125) (Bacillus halodurans).